The chain runs to 537 residues: ATP synthase subunit alpha (537 aa).

171–178 (GDRQTGKT) serves as a coordination point for ATP.

The protein belongs to the ATPase alpha/beta chains family. F-type ATPases have 2 components, CF(1) - the catalytic core - and CF(0) - the membrane proton channel. CF(1) has five subunits: alpha(3), beta(3), gamma(1), delta(1), epsilon(1). CF(0) has four main subunits: a, b, b' and c.

The protein localises to the cell inner membrane. The enzyme catalyses ATP + H2O + 4 H(+)(in) = ADP + phosphate + 5 H(+)(out). In terms of biological role, produces ATP from ADP in the presence of a proton gradient across the membrane. The alpha chain is a regulatory subunit. The polypeptide is ATP synthase subunit alpha (Chloroherpeton thalassium (strain ATCC 35110 / GB-78)).